A 266-amino-acid polypeptide reads, in one-letter code: Thymidylate synthase (266 aa).

Residue arginine 24 participates in dUMP binding. Position 54 (histidine 54) interacts with (6R)-5,10-methylene-5,6,7,8-tetrahydrofolate. 129–130 (RR) contacts dUMP. The active-site Nucleophile is cysteine 149. DUMP-binding positions include 169–172 (RSAD), asparagine 180, and 210–212 (HIY). Aspartate 172 provides a ligand contact to (6R)-5,10-methylene-5,6,7,8-tetrahydrofolate. A (6R)-5,10-methylene-5,6,7,8-tetrahydrofolate-binding site is contributed by alanine 265.

The protein belongs to the thymidylate synthase family. Bacterial-type ThyA subfamily. Homodimer.

The protein localises to the cytoplasm. The enzyme catalyses dUMP + (6R)-5,10-methylene-5,6,7,8-tetrahydrofolate = 7,8-dihydrofolate + dTMP. It participates in pyrimidine metabolism; dTTP biosynthesis. Its function is as follows. Catalyzes the reductive methylation of 2'-deoxyuridine-5'-monophosphate (dUMP) to 2'-deoxythymidine-5'-monophosphate (dTMP) while utilizing 5,10-methylenetetrahydrofolate (mTHF) as the methyl donor and reductant in the reaction, yielding dihydrofolate (DHF) as a by-product. This enzymatic reaction provides an intracellular de novo source of dTMP, an essential precursor for DNA biosynthesis. This is Thymidylate synthase from Mycobacterium bovis (strain ATCC BAA-935 / AF2122/97).